The sequence spans 161 residues: Tick receptor for ospA (161 aa).

As to quaternary structure, interacts with ospA protein from B.burgdorferi. In terms of processing, glycosylated. In terms of tissue distribution, specifically expressed in gut. Localizes predominantly in the intercellular spaces and luminal surface of the gut. In the gut, it localizes along tight junctions. Not expressed in salivary gland or hemolymph.

It localises to the cell membrane. Its function is as follows. Serves as a receptor for ospA protein of B.burgdorferi, the Lyme disease agent. Required for spirochetal colonization. Essential for pathogen adherence to the vector. The protein is Tick receptor for ospA (TROSPA) of Ixodes scapularis (Black-legged tick).